Here is a 311-residue protein sequence, read N- to C-terminus: Dihydroorotate dehydrogenase B (NAD(+)), catalytic subunit (311 aa).

FMN contacts are provided by residues serine 24 and 48–49 (KA). Substrate contacts are provided by residues lysine 48 and 72 to 76 (NAIGL). The FMN site is built by asparagine 104 and asparagine 132. Position 132 (asparagine 132) interacts with substrate. Cysteine 135 functions as the Nucleophile in the catalytic mechanism. Residues lysine 170 and isoleucine 196 each coordinate FMN. 197–198 (NT) contacts substrate. FMN is bound by residues glycine 222, 248-249 (GG), and 270-271 (GT).

The protein belongs to the dihydroorotate dehydrogenase family. Type 1 subfamily. Heterotetramer of 2 PyrK and 2 PyrD type B subunits. Requires FMN as cofactor.

It localises to the cytoplasm. It carries out the reaction (S)-dihydroorotate + NAD(+) = orotate + NADH + H(+). The protein operates within pyrimidine metabolism; UMP biosynthesis via de novo pathway; orotate from (S)-dihydroorotate (NAD(+) route): step 1/1. Functionally, catalyzes the conversion of dihydroorotate to orotate with NAD(+) as electron acceptor. Cannot use fumarate as an electron acceptor. This chain is Dihydroorotate dehydrogenase B (NAD(+)), catalytic subunit (pyrDB), found in Lactococcus lactis subsp. cremoris (strain MG1363).